Consider the following 194-residue polypeptide: Large ribosomal subunit protein eL15 (194 aa).

The tract at residues Ala165–Lys194 is disordered.

This sequence belongs to the eukaryotic ribosomal protein eL15 family.

This Methanococcus aeolicus (strain ATCC BAA-1280 / DSM 17508 / OCM 812 / Nankai-3) protein is Large ribosomal subunit protein eL15.